The chain runs to 209 residues: A-type ATP synthase subunit D (209 aa).

Belongs to the V-ATPase D subunit family. In terms of assembly, has multiple subunits with at least A(3), B(3), C, D, E, F, H, I and proteolipid K(x).

The protein resides in the cell membrane. In terms of biological role, component of the A-type ATP synthase that produces ATP from ADP in the presence of a proton gradient across the membrane. The sequence is that of A-type ATP synthase subunit D from Sulfolobus acidocaldarius (strain ATCC 33909 / DSM 639 / JCM 8929 / NBRC 15157 / NCIMB 11770).